A 173-amino-acid chain; its full sequence is MSEEVQERIWILITPDKCSGCRLCEVTCSLEHEGIIWPEASRIRVFELFPGINVPHTCVQCPDYPCVNACPTNALSVDEKTGAVVVNEEKCITCGACVLACPGKVPRIPAGKGSVVICDLCGGNPKCVEICHEAGHDALKIVTGNYRPIYRTFAKDPQEKSLDIARKVFGEDF.

3 4Fe-4S ferredoxin-type domains span residues 9–40 (IWIL…WPEA), 48–80 (LFPG…VDEK), and 82–111 (GAVV…IPAG). Positions 18, 21, 24, 28, 58, 61, 66, 70, 91, 94, 97, 101, 118, 121, 127, and 131 each coordinate [4Fe-4S] cluster.

In terms of assembly, heterodimer composed of a small WOR5-S subunit, with four [4Fe-4S] clusters, and a large WOR5-L subunit, containing the active site tungsto-bispyranopterin cofactor as well as another [4Fe-4S] cluster. It depends on [4Fe-4S] cluster as a cofactor.

The protein resides in the cytoplasm. Functionally, polyferredoxin-like subunit of an oxidoreductase that can desulfonate and oxidize aliphatic sulfonates such as taurine. May serve as a an electron-transfer subunit between the catalytic subunit and ferredoxin. The chain is Aliphatic sulfonate oxidoreductase, polyferredoxin-like subunit from Pyrococcus furiosus (strain ATCC 43587 / DSM 3638 / JCM 8422 / Vc1).